Consider the following 507-residue polypeptide: Methionine--tRNA ligase (507 aa).

Positions 12 to 22 (YYVNDVSHIGH) match the 'HIGH' region motif. The 'KMSKS' region signature appears at 295-299 (KISKS). K298 provides a ligand contact to ATP.

This sequence belongs to the class-I aminoacyl-tRNA synthetase family. MetG type 2B subfamily. In terms of assembly, monomer.

The protein resides in the cytoplasm. It carries out the reaction tRNA(Met) + L-methionine + ATP = L-methionyl-tRNA(Met) + AMP + diphosphate. Functionally, is required not only for elongation of protein synthesis but also for the initiation of all mRNA translation through initiator tRNA(fMet) aminoacylation. In Rickettsia typhi (strain ATCC VR-144 / Wilmington), this protein is Methionine--tRNA ligase.